We begin with the raw amino-acid sequence, 442 residues long: ATP-dependent protease ATPase subunit HslU (442 aa).

ATP-binding positions include Ile-18 and 60 to 65 (GVGKTE). The segment at 137–156 (PKPKNDWESTETDSSSNTRQ) is disordered. Residues Asp-255, Glu-320, and Arg-392 each contribute to the ATP site.

This sequence belongs to the ClpX chaperone family. HslU subfamily. As to quaternary structure, a double ring-shaped homohexamer of HslV is capped on each side by a ring-shaped HslU homohexamer. The assembly of the HslU/HslV complex is dependent on binding of ATP.

It is found in the cytoplasm. ATPase subunit of a proteasome-like degradation complex; this subunit has chaperone activity. The binding of ATP and its subsequent hydrolysis by HslU are essential for unfolding of protein substrates subsequently hydrolyzed by HslV. HslU recognizes the N-terminal part of its protein substrates and unfolds these before they are guided to HslV for hydrolysis. The sequence is that of ATP-dependent protease ATPase subunit HslU from Shewanella baltica (strain OS155 / ATCC BAA-1091).